Reading from the N-terminus, the 235-residue chain is Effector CFEM1 (235 aa).

An N-terminal signal peptide occupies residues 1-17 (MKFSAPVLAIFLASASA). A CFEM domain is found at 18–114 (QSTAELAAQI…ASASASSSAS (97 aa)). 4 disulfide bridges follow: Cys30/Cys72, Cys34/Cys67, Cys44/Cys51, and Cys53/Cys88. Asp48 is a heme binding site. The GPI-anchor amidated threonine moiety is linked to residue Thr211. Residues 212 to 235 (AAGVKEEASFFIPAAVALFAVFAV) constitute a propeptide, removed in mature form.

Belongs to the RBT5 family.

Its subcellular location is the cell membrane. It localises to the secreted. The protein resides in the host cytoplasm. The protein localises to the host nucleus. It is found in the host cell membrane. Its function is as follows. Appears to function during host infection, and may play a role in suppressing the host immune response. In Marssonina brunnea f. sp. multigermtubi (strain MB_m1) (Marssonina leaf spot fungus), this protein is Effector CFEM1.